Here is a 167-residue protein sequence, read N- to C-terminus: I-Kappa-B like protein I1 (167 aa).

3 ANK repeats span residues 54 to 86, 91 to 121, and 125 to 154; these read HGKQ…DING, FGNT…NMGI, and LFKT…QCRI.

Belongs to the polydnaviridae I-Kappa-B-like protein family.

In terms of biological role, suppresses the host immune response through NF-kappa-B inactivation. Possesses ankyrin repeat domains required for NF-kappa-B binding but lacks the regulatory regions required for dissociation from NF-kappa-B and degradation. Therefore, prevents host NF-kappa-B release and subsequent activation. The polypeptide is I-Kappa-B like protein I1 (I1) (Microplitis demolitor (Parasitoid wasp)).